The primary structure comprises 103 residues: High-potential iron-sulfur protein (103 aa).

Positions 1-28 (MSNRRLFLKSIPIMAAAGAVGMAGLARA) are cleaved as a signal peptide. Residues Cys66, Cys69, Cys82, and Cys96 each coordinate [4Fe-4S] cluster.

It belongs to the high-potential iron-sulfur protein (HiPIP) family. In terms of assembly, homodimer.

The protein resides in the periplasm. In terms of biological role, specific class of high-redox-potential 4Fe-4S ferredoxins. Functions in anaerobic electron transport in most purple and in some other photosynthetic bacteria and in at least one genus (Paracoccus) of halophilic, denitrifying bacteria. This chain is High-potential iron-sulfur protein (hip), found in Ralstonia nicotianae (strain ATCC BAA-1114 / GMI1000) (Ralstonia solanacearum).